The chain runs to 326 residues: Bifunctional pinoresinol-lariciresinol reductase (326 aa).

Residues 25-31, R50, and K59 each bind NADP(+); that span reads GGTGYLG. Residue K153 is the Proton acceptor of the active site. R157 is an NADP(+) binding site. Substrate is bound at residue H285.

This sequence belongs to the NmrA-type oxidoreductase family. Isoflavone reductase subfamily. As to quaternary structure, dimer.

The enzyme catalyses (+)-lariciresinol + NADP(+) = (+)-pinoresinol + NADPH + H(+). The catalysed reaction is (-)-secoisolariciresinol + NADP(+) = (+)-lariciresinol + NADPH + H(+). Reductase involved in lignan biosynthesis. Catalyzes the enantioselective conversion of (+)-pinoresinol into (+)-lariciresinol and of (+)-lariciresinol into (-)-secoisolariciresinol. Abstracts the 4R-hydride from the NADPH cofactor during catalysis. In Linum album (Flax), this protein is Bifunctional pinoresinol-lariciresinol reductase (PLR1).